A 294-amino-acid chain; its full sequence is Cytidine deaminase (294 aa).

2 consecutive CMP/dCMP-type deaminase domains span residues 48–168 and 186–294; these read DEDA…FGPK and LTGD…VLLG. 89 to 91 is a substrate binding site; it reads NME. Residue H102 participates in Zn(2+) binding. E104 acts as the Proton donor in catalysis. Zn(2+) is bound by residues C129 and C132.

Belongs to the cytidine and deoxycytidylate deaminase family. Homodimer. Zn(2+) is required as a cofactor.

The enzyme catalyses cytidine + H2O + H(+) = uridine + NH4(+). It catalyses the reaction 2'-deoxycytidine + H2O + H(+) = 2'-deoxyuridine + NH4(+). In terms of biological role, this enzyme scavenges exogenous and endogenous cytidine and 2'-deoxycytidine for UMP synthesis. The sequence is that of Cytidine deaminase from Salmonella choleraesuis (strain SC-B67).